Reading from the N-terminus, the 291-residue chain is Phosphoribulokinase (291 aa).

ATP is bound at residue 12–20 (GSSGAGTTS).

This sequence belongs to the phosphoribulokinase family. In terms of assembly, homooctamer.

It carries out the reaction D-ribulose 5-phosphate + ATP = D-ribulose 1,5-bisphosphate + ADP + H(+). The protein operates within carbohydrate biosynthesis; Calvin cycle. In Xanthobacter flavus, this protein is Phosphoribulokinase (cbbP).